A 239-amino-acid chain; its full sequence is Large ribosomal subunit protein uL2 (239 aa).

2 disordered regions span residues 1-21 (MGKS…KSPS) and 203-239 (PFGG…GRRK). Positions 222–239 (PPGRKVGHIAARRTGRRK) are enriched in basic residues.

The protein belongs to the universal ribosomal protein uL2 family. As to quaternary structure, part of the 50S ribosomal subunit. Forms a bridge to the 30S subunit in the 70S ribosome.

Its function is as follows. One of the primary rRNA binding proteins. Required for association of the 30S and 50S subunits to form the 70S ribosome, for tRNA binding and peptide bond formation. It has been suggested to have peptidyltransferase activity; this is somewhat controversial. Makes several contacts with the 16S rRNA in the 70S ribosome. The sequence is that of Large ribosomal subunit protein uL2 from Pyrococcus furiosus (strain ATCC 43587 / DSM 3638 / JCM 8422 / Vc1).